A 357-amino-acid polypeptide reads, in one-letter code: Protein BMRF2 (357 aa).

Residues 1-11 (MFSCKQHLSLG) are Virion surface-facing. A transmembrane span lies at residues 12-32 (ACVFCLGLLASTPFIWCFVFA). Topologically, residues 33 to 46 (NLLSLEIFSPWQTH) are intravirion. Residues 47–67 (VYRLGFPTACLMAVLWTLVPA) are membrane-embedded. Topologically, residues 68–70 (KHA) are virion surface. A transmembrane span lies at residues 71-91 (VRAVTPAIMLNIASALIFFSL). Topologically, residues 92–98 (RVYSTST) are intravirion. A transmembrane helix spans residues 99 to 121 (WVSAPCLFLANLPLLCLWPRLAI). The Virion surface segment spans residues 122 to 133 (EIVYICPAIHQR). At 134-154 (FFELGLLLACTIFALSVVSRA) the chain is embedded in the membrane. Over 155 to 158 (LEVS) the chain is Intravirion. Positions 159–179 (AVFMSPFFIFLALGSGSLAGA) form a transmembrane segment. At 180–217 (RRNQIYTSGLERRRSIFCARGDHSVASLKETLHKCPWD) the chain is on the virion surface side. The Integrin binding site signature appears at 199–201 (RGD). At 218 to 238 (LLAISALTVLVVCVMIVLHVH) the chain is embedded in the membrane. The Intravirion portion of the chain corresponds to 239–240 (AE). The chain crosses the lipid bilayer at residues 241–261 (VFFGLSRYLPLFLCGAMASGG). At 262-267 (LYLGHS) the chain is on the virion surface side. Positions 268–288 (SIIACVMATLCTLSSVVVYFL) form a transmembrane segment. Over 289 to 298 (HETLGPLGKT) the chain is Intravirion. Positions 299 to 319 (VLFISIFVYYFSGVAALSAAM) form a transmembrane segment. Residues 320–335 (RYKLKKFVNGPLVHLR) lie on the Virion surface side of the membrane. The segment at 336–356 (VVYMCCFVFTFCEYLLVTFIK) is a transmembrane helix. Residue S357 is a topological domain, intravirion.

The protein belongs to the herpesviridae BMRF2 family. As to quaternary structure, interacts with BDLF2. Interacts with host beta1 integrin family. Extensively glycosylated by O-linked oligosaccharides.

It is found in the virion membrane. The protein resides in the host cell membrane. Its function is as follows. Facilitates virus attachment to oral epithelial cells by binding to host beta1 integrin family. Participates in rearrangement of cellular actin to increase intercellular contacts by binding BDLF2 and thereby promote virus cell-to-cell spreading. This Homo sapiens (Human) protein is Protein BMRF2.